The chain runs to 151 residues: Ribosome maturation factor RimP (151 aa).

Belongs to the RimP family.

It localises to the cytoplasm. Its function is as follows. Required for maturation of 30S ribosomal subunits. This chain is Ribosome maturation factor RimP, found in Shewanella putrefaciens (strain CN-32 / ATCC BAA-453).